A 262-amino-acid polypeptide reads, in one-letter code: Tryptophan synthase alpha chain (262 aa).

Catalysis depends on proton acceptor residues E48 and D59.

This sequence belongs to the TrpA family. As to quaternary structure, tetramer of two alpha and two beta chains.

It carries out the reaction (1S,2R)-1-C-(indol-3-yl)glycerol 3-phosphate + L-serine = D-glyceraldehyde 3-phosphate + L-tryptophan + H2O. Its pathway is amino-acid biosynthesis; L-tryptophan biosynthesis; L-tryptophan from chorismate: step 5/5. In terms of biological role, the alpha subunit is responsible for the aldol cleavage of indoleglycerol phosphate to indole and glyceraldehyde 3-phosphate. The polypeptide is Tryptophan synthase alpha chain (Helicobacter pylori (strain Shi470)).